Reading from the N-terminus, the 285-residue chain is Formate channel FocA (285 aa).

Residues 1-30 lie on the Cytoplasmic side of the membrane; sequence MKADNPFDLLLPAAMAKVAEEAGVYKATKH. A helical membrane pass occupies residues 31–56; the sequence is PLKTFYLAITAGVFISIAFVFYITAT. Residues 57 to 64 lie on the Periplasmic side of the membrane; the sequence is TGTGTMPF. The chain crosses the membrane as a helical span at residues 65 to 85; the sequence is GMAKLVGGICFSLGLILCVVC. The Cytoplasmic portion of the chain corresponds to 86 to 112; the sequence is GADLFTSTVLIVVAKASGRITWGQLAK. Residues 113–135 form a helical membrane-spanning segment; the sequence is NWLNVYFGNLVGALLFVLLMWLS. The Periplasmic portion of the chain corresponds to 136-160; sequence GEYMTANGQWGLNVLQTADHKVHHT. The helical transmembrane segment at 161–181 threads the bilayer; sequence FIEAVCLGILANLMVCLAVWM. The Cytoplasmic portion of the chain corresponds to 182 to 187; the sequence is SYSGRS. A helical transmembrane segment spans residues 188-205; that stretch reads LMDKAFIMVLPVAMFVAS. The Periplasmic portion of the chain corresponds to 206–249; it reads GFEHSIANMFMIPMGIVIRDFASPEFWTAVGSAPENFSHLTVMN. Residues 250–276 form a helical membrane-spanning segment; it reads FITDNLIPVTIGNIIGGGLLVGLTYWV. The Cytoplasmic portion of the chain corresponds to 277 to 285; that stretch reads IYLRENDHH.

Belongs to the FNT transporter (TC 1.A.16) family. In terms of assembly, homopentamer.

Its subcellular location is the cell inner membrane. It carries out the reaction formate(in) = formate(out). Involved in the bidirectional transport of formate during mixed-acid fermentation. Functions to maintain relatively constant intracellular formate levels during growth, using different mechanisms for efflux and uptake of the anion. Is impermeable to water. This Escherichia coli O157:H7 protein is Formate channel FocA.